The following is a 91-amino-acid chain: Small ribosomal subunit protein uS19 (91 aa).

Belongs to the universal ribosomal protein uS19 family.

Functionally, protein S19 forms a complex with S13 that binds strongly to the 16S ribosomal RNA. The chain is Small ribosomal subunit protein uS19 from Desulfotalea psychrophila (strain LSv54 / DSM 12343).